The following is a 350-amino-acid chain: uncharacterized protein (350 aa).

Disordered regions lie at residues 1–21 (MDSF…SSLN), 237–266 (NSDV…PISP), and 278–298 (EMST…KKRT). 2 stretches are compositionally biased toward polar residues: residues 10-21 (KPTTATSNSSLN) and 246-259 (EDSS…TKPS). Residues 287–298 (SRSRTPSSKKRT) show a composition bias toward basic residues.

It localises to the nucleus. This is an uncharacterized protein from Schizosaccharomyces pombe (strain 972 / ATCC 24843) (Fission yeast).